The chain runs to 351 residues: Dihydroorotate dehydrogenase (quinone) (351 aa).

FMN contacts are provided by residues 61–65 (AGLDK) and Thr85. Position 65 (Lys65) interacts with substrate. Substrate is bound at residue 110–114 (NRMGF). FMN is bound by residues Asn139 and Asn172. Asn172 is a binding site for substrate. The active-site Nucleophile is Ser175. Residue Asn177 participates in substrate binding. Lys217 and Thr245 together coordinate FMN. 246–247 (NT) serves as a coordination point for substrate. FMN-binding positions include Gly268, Gly297, and 318–319 (YT).

Belongs to the dihydroorotate dehydrogenase family. Type 2 subfamily. In terms of assembly, monomer. It depends on FMN as a cofactor.

The protein resides in the cell membrane. It carries out the reaction (S)-dihydroorotate + a quinone = orotate + a quinol. Its pathway is pyrimidine metabolism; UMP biosynthesis via de novo pathway; orotate from (S)-dihydroorotate (quinone route): step 1/1. Functionally, catalyzes the conversion of dihydroorotate to orotate with quinone as electron acceptor. The chain is Dihydroorotate dehydrogenase (quinone) from Xylella fastidiosa (strain 9a5c).